Reading from the N-terminus, the 368-residue chain is Quinolinate synthase (368 aa).

Positions 46 and 63 each coordinate iminosuccinate. A [4Fe-4S] cluster-binding site is contributed by cysteine 110. Iminosuccinate is bound by residues 141-143 (YVN) and serine 162. Cysteine 230 is a binding site for [4Fe-4S] cluster. Residues 256 to 258 (HPE) and threonine 273 each bind iminosuccinate. Residue cysteine 320 participates in [4Fe-4S] cluster binding.

This sequence belongs to the quinolinate synthase family. Type 3 subfamily. The cofactor is [4Fe-4S] cluster.

The protein localises to the cytoplasm. It carries out the reaction iminosuccinate + dihydroxyacetone phosphate = quinolinate + phosphate + 2 H2O + H(+). The protein operates within cofactor biosynthesis; NAD(+) biosynthesis; quinolinate from iminoaspartate: step 1/1. Catalyzes the condensation of iminoaspartate with dihydroxyacetone phosphate to form quinolinate. This chain is Quinolinate synthase, found in Bacillus thuringiensis subsp. konkukian (strain 97-27).